The following is a 382-amino-acid chain: Mannitol-1-phosphate 5-dehydrogenase (382 aa).

Residue 3–14 (ALHFGAGNIGRG) coordinates NAD(+). Lys-269 carries the N6-acetyllysine modification.

The protein belongs to the mannitol dehydrogenase family.

The enzyme catalyses D-mannitol 1-phosphate + NAD(+) = beta-D-fructose 6-phosphate + NADH + H(+). The protein is Mannitol-1-phosphate 5-dehydrogenase of Escherichia coli O139:H28 (strain E24377A / ETEC).